The chain runs to 727 residues: Endothelin-converting enzyme homolog (727 aa).

At 1 to 44 (MSFNFSRYSGAYTTTFSFLLLALLIVSAVLLSRPYAPALLHAEE) the chain is on the cytoplasmic side. A helical; Signal-anchor for type II membrane protein transmembrane segment spans residues 45-65 (AYCVSMSCVTAAASVLSLMDA). The Peptidase M13 domain maps to 46–727 (YCVSMSCVTA…MNPVHKCEVW (682 aa)). Disulfide bonds link Cys-47/Cys-52, Cys-70/Cys-712, Cys-78/Cys-672, Cys-134/Cys-392, and Cys-601/Cys-724. Residues 66–727 (TADPCSDFYQ…MNPVHKCEVW (662 aa)) lie on the Extracellular side of the membrane. N-linked (GlcNAc...) asparagine glycans are attached at residues Asn-138, Asn-160, Asn-164, Asn-169, Asn-222, Asn-309, Asn-337, Asn-340, and Asn-511. Zn(2+) is bound at residue His-564. Residue Glu-565 is part of the active site. Residue His-568 participates in Zn(2+) binding. 2 N-linked (GlcNAc...) asparagine glycosylation sites follow: Asn-589 and Asn-608. Residue Glu-624 participates in Zn(2+) binding. The active-site Proton donor is the Asp-628. N-linked (GlcNAc...) asparagine glycosylation is present at Asn-656.

It belongs to the peptidase M13 family. Zn(2+) is required as a cofactor. As to expression, highly expressed in brain and midgut, and to a lesser extent in fat body, ovaries, testes and haemocytes.

It localises to the cell membrane. This Locusta migratoria (Migratory locust) protein is Endothelin-converting enzyme homolog.